Here is a 349-residue protein sequence, read N- to C-terminus: Nicotinate-nucleotide--dimethylbenzimidazole phosphoribosyltransferase (349 aa).

Residue Glu-318 is the Proton acceptor of the active site.

This sequence belongs to the CobT family.

The enzyme catalyses 5,6-dimethylbenzimidazole + nicotinate beta-D-ribonucleotide = alpha-ribazole 5'-phosphate + nicotinate + H(+). It participates in nucleoside biosynthesis; alpha-ribazole biosynthesis; alpha-ribazole from 5,6-dimethylbenzimidazole: step 1/2. Its function is as follows. Catalyzes the synthesis of alpha-ribazole-5'-phosphate from nicotinate mononucleotide (NAMN) and 5,6-dimethylbenzimidazole (DMB). This is Nicotinate-nucleotide--dimethylbenzimidazole phosphoribosyltransferase from Alkaliphilus metalliredigens (strain QYMF).